The chain runs to 648 residues: Rab11 family-interacting protein 1 (648 aa).

One can recognise a C2 domain in the interval Met-1–Tyr-129. Positions Ser-164 to Thr-188 are enriched in basic and acidic residues. 3 disordered regions span residues Ser-164 to Gly-470, Val-483 to Pro-503, and Val-516 to Thr-555. Residues Ser-189 to Pro-201 are compositionally biased toward polar residues. Ser-205, Ser-209, and Ser-237 each carry phosphoserine. 2 stretches are compositionally biased toward polar residues: residues Pro-227–Pro-242 and Ser-271–Ser-296. Ser-304, Ser-319, Ser-343, Ser-345, Ser-347, Ser-349, Ser-360, Ser-361, and Ser-386 each carry phosphoserine. The segment covering Asp-314–Ile-323 has biased composition (polar residues). Basic and acidic residues-rich tracts occupy residues Ser-381–Met-394 and Ala-422–Lys-436. Ser-438 is modified (phosphoserine). A compositionally biased stretch (basic and acidic residues) spans Gly-445–Glu-454. Residues Lys-576–Pro-638 enclose the FIP-RBD domain. The necessary for interaction with RAB4A and RAB11A, subcellular location and endosomal recycling stretch occupies residues Ala-584 to Met-648.

As to quaternary structure, homooligomer. Interacts with RAB11A, RAB11B, RAB25, RAB4A and RAB14.

Its subcellular location is the recycling endosome. It localises to the cytoplasmic vesicle. In terms of biological role, a Rab11 effector protein involved in the endosomal recycling process. Also involved in controlling membrane trafficking along the phagocytic pathway and in phagocytosis. Interaction with RAB14 may function in the process of neurite formation. The protein is Rab11 family-interacting protein 1 of Rattus norvegicus (Rat).